We begin with the raw amino-acid sequence, 259 residues long: Dihydroorotate dehydrogenase B (NAD(+)), electron transfer subunit (259 aa).

The FAD-binding FR-type domain occupies 2–102 (MQKQNMIVVN…LGPLGHGFPL (101 aa)). Residues 53–56 (RPIS), 70–72 (LYR), and 77–78 (GT) each bind FAD. 4 residues coordinate [2Fe-2S] cluster: Cys221, Cys226, Cys229, and Cys246.

Belongs to the PyrK family. As to quaternary structure, heterotetramer of 2 PyrK and 2 PyrD type B subunits. It depends on [2Fe-2S] cluster as a cofactor. FAD serves as cofactor.

It functions in the pathway pyrimidine metabolism; UMP biosynthesis via de novo pathway; orotate from (S)-dihydroorotate (NAD(+) route): step 1/1. Its function is as follows. Responsible for channeling the electrons from the oxidation of dihydroorotate from the FMN redox center in the PyrD type B subunit to the ultimate electron acceptor NAD(+). The protein is Dihydroorotate dehydrogenase B (NAD(+)), electron transfer subunit of Bacillus cereus (strain B4264).